The chain runs to 156 residues: Ribosomal RNA large subunit methyltransferase H (156 aa).

S-adenosyl-L-methionine-binding positions include leucine 73, glycine 104, and 123–128; that span reads LGALTL.

Belongs to the RNA methyltransferase RlmH family. Homodimer.

The protein resides in the cytoplasm. The enzyme catalyses pseudouridine(1915) in 23S rRNA + S-adenosyl-L-methionine = N(3)-methylpseudouridine(1915) in 23S rRNA + S-adenosyl-L-homocysteine + H(+). Specifically methylates the pseudouridine at position 1915 (m3Psi1915) in 23S rRNA. The polypeptide is Ribosomal RNA large subunit methyltransferase H (Dichelobacter nodosus (strain VCS1703A)).